A 179-amino-acid polypeptide reads, in one-letter code: Large ribosomal subunit protein uL5 (179 aa).

This sequence belongs to the universal ribosomal protein uL5 family. Part of the 50S ribosomal subunit; part of the 5S rRNA/L5/L18/L25 subcomplex. Contacts the 5S rRNA and the P site tRNA. Forms a bridge to the 30S subunit in the 70S ribosome.

Its function is as follows. This is one of the proteins that bind and probably mediate the attachment of the 5S RNA into the large ribosomal subunit, where it forms part of the central protuberance. In the 70S ribosome it contacts protein S13 of the 30S subunit (bridge B1b), connecting the 2 subunits; this bridge is implicated in subunit movement. Contacts the P site tRNA; the 5S rRNA and some of its associated proteins might help stabilize positioning of ribosome-bound tRNAs. In Pelobacter propionicus (strain DSM 2379 / NBRC 103807 / OttBd1), this protein is Large ribosomal subunit protein uL5.